Consider the following 395-residue polypeptide: 8-amino-7-oxononanoate synthase (395 aa).

Arginine 24 contacts substrate. Position 111–112 (111–112) interacts with pyridoxal 5'-phosphate; the sequence is GF. Histidine 136 contributes to the substrate binding site. Residues serine 184, 209–212, and 240–243 each bind pyridoxal 5'-phosphate; these read DDAH and TLSK. An N6-(pyridoxal phosphate)lysine modification is found at lysine 243. Threonine 357 provides a ligand contact to substrate.

The protein belongs to the class-II pyridoxal-phosphate-dependent aminotransferase family. BioF subfamily. As to quaternary structure, homodimer. Pyridoxal 5'-phosphate serves as cofactor.

It catalyses the reaction 6-carboxyhexanoyl-[ACP] + L-alanine + H(+) = (8S)-8-amino-7-oxononanoate + holo-[ACP] + CO2. It functions in the pathway cofactor biosynthesis; biotin biosynthesis. In terms of biological role, catalyzes the decarboxylative condensation of pimeloyl-[acyl-carrier protein] and L-alanine to produce 8-amino-7-oxononanoate (AON), [acyl-carrier protein], and carbon dioxide. The protein is 8-amino-7-oxononanoate synthase of Thermoanaerobacter pseudethanolicus (strain ATCC 33223 / 39E) (Clostridium thermohydrosulfuricum).